The chain runs to 206 residues: Thiamine-phosphate synthase (206 aa).

Residues 39 to 43 (QYREK) and Asn74 contribute to the 4-amino-2-methyl-5-(diphosphooxymethyl)pyrimidine site. Mg(2+)-binding residues include Asp75 and Asp94. Ser112 contributes to the 4-amino-2-methyl-5-(diphosphooxymethyl)pyrimidine binding site. 138–140 (TNT) is a binding site for 2-[(2R,5Z)-2-carboxy-4-methylthiazol-5(2H)-ylidene]ethyl phosphate. 4-amino-2-methyl-5-(diphosphooxymethyl)pyrimidine is bound at residue Lys141. 2-[(2R,5Z)-2-carboxy-4-methylthiazol-5(2H)-ylidene]ethyl phosphate contacts are provided by residues Gly170 and 190-191 (IS).

The protein belongs to the thiamine-phosphate synthase family. Mg(2+) is required as a cofactor.

The catalysed reaction is 2-[(2R,5Z)-2-carboxy-4-methylthiazol-5(2H)-ylidene]ethyl phosphate + 4-amino-2-methyl-5-(diphosphooxymethyl)pyrimidine + 2 H(+) = thiamine phosphate + CO2 + diphosphate. It catalyses the reaction 2-(2-carboxy-4-methylthiazol-5-yl)ethyl phosphate + 4-amino-2-methyl-5-(diphosphooxymethyl)pyrimidine + 2 H(+) = thiamine phosphate + CO2 + diphosphate. It carries out the reaction 4-methyl-5-(2-phosphooxyethyl)-thiazole + 4-amino-2-methyl-5-(diphosphooxymethyl)pyrimidine + H(+) = thiamine phosphate + diphosphate. The protein operates within cofactor biosynthesis; thiamine diphosphate biosynthesis; thiamine phosphate from 4-amino-2-methyl-5-diphosphomethylpyrimidine and 4-methyl-5-(2-phosphoethyl)-thiazole: step 1/1. In terms of biological role, condenses 4-methyl-5-(beta-hydroxyethyl)thiazole monophosphate (THZ-P) and 2-methyl-4-amino-5-hydroxymethyl pyrimidine pyrophosphate (HMP-PP) to form thiamine monophosphate (TMP). This chain is Thiamine-phosphate synthase, found in Oceanobacillus iheyensis (strain DSM 14371 / CIP 107618 / JCM 11309 / KCTC 3954 / HTE831).